The sequence spans 685 residues: MSRTLRPSAMGSRVGALASPGLALLLSLTAHCSGPQAKGLPKGGLNASEANTWVRNNTSLLQNFWCLPASQLPREQLSSLIRSLASQRVALKAWQLSCLANLAAQLGLQDDFEFHPPNLLLFYDLSQVGDTNCRAFIHHAAQGDTELLTNLPNQRVALQRTALACLGGPHLQLSASDLWLLGVLVCDMEAAQIVTADPSVLRNLLRCPRLTVMQTAALNTLLASGKTQIGPPGSWNLQGLQALGLLATYISPHLWEKVQEAVGLDFFRSVVAACRAGQLSRHDARRFVDNFLESKATSVSSRPKRRTGRSCVRGNITAATLHDDLFLVHYDCTQLESCLGTRVLRANLDPLLQHPLPAECQRVVKAKLTQIYPHGIPEDQLHLIPSLVYLYSLAEIGQWNITSGDTVMILLASDAALDNQTEAVLQRFLDHNGKVTGALLVAIGGSRLCWMSLKQLQFIQPSEFRLAGAPDISPCPQSRKDALFVKAHEVFRNTSNVGEYYYLIRPYLGGAPLEELQYLAQANISMDIDTFTNLNPLTLKSMGVDSVRNLLGQNLGDLRKARNHPNVILWMHSHNMTDLSDMGLYTSPTQAYVANRPPNTAYPPSSLIHSLDPPGNDGVSHTSGSPPVHLGYLSLAVALPSSLLWLLLCQLPSGQMATAHRTLGPMALAQGSWTPEHQIPEKRSC.

The signal sequence occupies residues 1-32; the sequence is MSRTLRPSAMGSRVGALASPGLALLLSLTAHC. The Extracellular segment spans residues 33–627; the sequence is SGPQAKGLPK…GVSHTSGSPP (595 aa). Asn315 and Asn400 each carry an N-linked (GlcNAc...) asparagine glycan. The segment at 603–624 is disordered; that stretch reads PPSSLIHSLDPPGNDGVSHTSG. The chain crosses the membrane as a helical span at residues 628 to 648; that stretch reads VHLGYLSLAVALPSSLLWLLL. The Cytoplasmic portion of the chain corresponds to 649 to 685; that stretch reads CQLPSGQMATAHRTLGPMALAQGSWTPEHQIPEKRSC.

Belongs to the mesothelin family.

The protein resides in the membrane. Its function is as follows. May play a role in cellular adhesion. The polypeptide is Mesothelin-like protein (Mslnl) (Mus musculus (Mouse)).